The chain runs to 153 residues: UPF0225 protein ETA_15740 (153 aa).

Belongs to the UPF0225 family.

This chain is UPF0225 protein ETA_15740, found in Erwinia tasmaniensis (strain DSM 17950 / CFBP 7177 / CIP 109463 / NCPPB 4357 / Et1/99).